A 143-amino-acid chain; its full sequence is Transcriptional regulator MraZ (143 aa).

SpoVT-AbrB domains follow at residues 5-47 (EYTH…PLIE) and 76-119 (ACEC…DAER).

Belongs to the MraZ family. In terms of assembly, forms oligomers.

It localises to the cytoplasm. The protein localises to the nucleoid. This Limosilactobacillus fermentum (strain NBRC 3956 / LMG 18251) (Lactobacillus fermentum) protein is Transcriptional regulator MraZ.